The primary structure comprises 496 residues: MFS transporter cpaT (496 aa).

The disordered stretch occupies residues 1-45 (MGHQEEPPRICKTPSGHEQGEGPAEKTSKPSTEEVGWDGPTDPAR). The segment covering 18–32 (EQGEGPAEKTSKPST) has biased composition (basic and acidic residues). N-linked (GlcNAc...) asparagine glycosylation occurs at Asn-48. A helical transmembrane segment spans residues 58–78 (MGIISYLTFLTPLTSSIVAPA). Residue Asn-90 is glycosylated (N-linked (GlcNAc...) asparagine). 5 consecutive transmembrane segments (helical) span residues 93–113 (LASFVVSIYLVGFAVGPLFLA), 130–150 (FIFTIWNIAGAVAPNVGALLV), 154–174 (FAGISGSGPVTLGAGSVADMF), 180–200 (GVAMSLYGLGPLLGPVIGPIA), and 212–232 (WVFWLLAIVSGVAVILVLFVL). Asn-252 carries an N-linked (GlcNAc...) asparagine glycan. Helical transmembrane passes span 288–308 (VALFSLYTGVVFGYLYLLFTT), 325–345 (GLVYIGIGVGALIGISCFGAL), 367–387 (LPPLIPGSFLIPIGLFWYGWS), 395–415 (IMPIIGLGWVGCGMIATLLPI), 427–449 (AASAIAANTVVRSIVGAFLPLAG), and 463–483 (SLLGFVALGLLPVPVVFYFYG).

It belongs to the major facilitator superfamily.

Its subcellular location is the membrane. Functionally, MFS transporter; part of the gene cluster that mediates the biosynthesis of the fungal neurotoxin cyclopiazonic acid (CPA), a nanomolar inhibitor of Ca(2+)-ATPase with a unique pentacyclic indole tetramic acid scaffold. This chain is MFS transporter cpaT, found in Aspergillus oryzae (Yellow koji mold).